Consider the following 898-residue polypeptide: Alanine--tRNA ligase (898 aa).

Zn(2+) contacts are provided by His564, His568, Cys682, and His686.

The protein belongs to the class-II aminoacyl-tRNA synthetase family. Requires Zn(2+) as cofactor.

It localises to the cytoplasm. It carries out the reaction tRNA(Ala) + L-alanine + ATP = L-alanyl-tRNA(Ala) + AMP + diphosphate. Functionally, catalyzes the attachment of alanine to tRNA(Ala) in a two-step reaction: alanine is first activated by ATP to form Ala-AMP and then transferred to the acceptor end of tRNA(Ala). Also edits incorrectly charged Ser-tRNA(Ala) and Gly-tRNA(Ala) via its editing domain. This Beijerinckia indica subsp. indica (strain ATCC 9039 / DSM 1715 / NCIMB 8712) protein is Alanine--tRNA ligase.